Reading from the N-terminus, the 521-residue chain is Endoplasmic reticulum mannosyl-oligosaccharide 1,2-alpha-mannosidase (521 aa).

The Cytoplasmic segment spans residues 1-8; the sequence is MVKRRTVK. A helical; Signal-anchor for type II membrane protein transmembrane segment spans residues 9–31; it reads YFLRRILALFVLCVPIYYLYTTV. Topologically, residues 32 to 521 are lumenal; sequence QRPPGYTKLK…IENNMDLYTV (490 aa). Residues asparagine 114, asparagine 167, asparagine 300, asparagine 342, and asparagine 378 are each glycosylated (N-linked (GlcNAc...) asparagine). Cysteine 330 and cysteine 373 form a disulfide bridge. Catalysis depends on glutamate 387, which acts as the Proton donor. A glycan (N-linked (GlcNAc...) asparagine) is linked at asparagine 499. Threonine 504 is a binding site for Ca(2+).

Belongs to the glycosyl hydrolase 47 family. Ca(2+) is required as a cofactor.

It localises to the membrane. The enzyme catalyses N(4)-(alpha-D-Man-(1-&gt;2)-alpha-D-Man-(1-&gt;2)-alpha-D-Man-(1-&gt;3)-[alpha-D-Man-(1-&gt;2)-alpha-D-Man-(1-&gt;3)-[alpha-D-Man-(1-&gt;2)-alpha-D-Man-(1-&gt;6)]-alpha-D-Man-(1-&gt;6)]-beta-D-Man-(1-&gt;4)-beta-D-GlcNAc-(1-&gt;4)-beta-D-GlcNAc)-L-asparaginyl-[protein] (N-glucan mannose isomer 9A1,2,3B1,2,3) + 4 H2O = N(4)-(alpha-D-Man-(1-&gt;3)-[alpha-D-Man-(1-&gt;3)-[alpha-D-Man-(1-&gt;6)]-alpha-D-Man-(1-&gt;6)]-beta-D-Man-(1-&gt;4)-beta-D-GlcNAc-(1-&gt;4)-beta-D-GlcNAc)-L-asparaginyl-[protein] (N-glucan mannose isomer 5A1,2) + 4 beta-D-mannose. The catalysed reaction is N(4)-(alpha-D-Man-(1-&gt;2)-alpha-D-Man-(1-&gt;2)-alpha-D-Man-(1-&gt;3)-[alpha-D-Man-(1-&gt;3)-[alpha-D-Man-(1-&gt;2)-alpha-D-Man-(1-&gt;6)]-alpha-D-Man-(1-&gt;6)]-beta-D-Man-(1-&gt;4)-beta-D-GlcNAc-(1-&gt;4)-beta-D-GlcNAc)-L-asparaginyl-[protein] (N-glucan mannose isomer 8A1,2,3B1,3) + 3 H2O = N(4)-(alpha-D-Man-(1-&gt;3)-[alpha-D-Man-(1-&gt;3)-[alpha-D-Man-(1-&gt;6)]-alpha-D-Man-(1-&gt;6)]-beta-D-Man-(1-&gt;4)-beta-D-GlcNAc-(1-&gt;4)-beta-D-GlcNAc)-L-asparaginyl-[protein] (N-glucan mannose isomer 5A1,2) + 3 beta-D-mannose. The protein operates within protein modification; protein glycosylation. Its activity is regulated as follows. Inhibited by kifunensine. Involved in glycoprotein quality control as it is important for the targeting of misfolded glycoproteins for degradation. It trims a single alpha-1,2-linked mannose residue from Man(9)GlcNAc(2) to produce Man(8)GlcNAc(2) with low efficiency. In Schizosaccharomyces pombe (strain 972 / ATCC 24843) (Fission yeast), this protein is Endoplasmic reticulum mannosyl-oligosaccharide 1,2-alpha-mannosidase.